Here is a 310-residue protein sequence, read N- to C-terminus: Pantothenate kinase (310 aa).

95–102 is a binding site for ATP; sequence GSVAVGKS.

This sequence belongs to the prokaryotic pantothenate kinase family.

The protein localises to the cytoplasm. The enzyme catalyses (R)-pantothenate + ATP = (R)-4'-phosphopantothenate + ADP + H(+). Its pathway is cofactor biosynthesis; coenzyme A biosynthesis; CoA from (R)-pantothenate: step 1/5. The protein is Pantothenate kinase of Mycobacteroides abscessus (strain ATCC 19977 / DSM 44196 / CCUG 20993 / CIP 104536 / JCM 13569 / NCTC 13031 / TMC 1543 / L948) (Mycobacterium abscessus).